Here is a 180-residue protein sequence, read N- to C-terminus: Chromatin structure-remodeling complex protein RSC14 (180 aa).

As to quaternary structure, interacts with STH1, RSC3 and ARP9. Component of the two forms of the RSC complex composed of at least either RSC1 or RSC2, and ARP7, ARP9, LDB7, NPL6, RSC3, RSC30, RSC4, RSC58, RSC6, RSC8, RSC9, SFH1, STH1, HTL1 and probably RTT102. The complexes interact with histone and histone variant components of centromeric chromatin. Component of a fungal-specific module (HTL1-LDB7-NPL6-RSC3-RSC30) within the RSC complex.

The protein resides in the nucleus. Its function is as follows. Component of the chromatin structure-remodeling complex (RSC), which is involved in transcription regulation and nucleosome positioning. RSC is responsible for the transfer of a histone octamer from a nucleosome core particle to naked DNA. The reaction requires ATP and involves an activated RSC-nucleosome intermediate. Remodeling reaction also involves DNA translocation, DNA twist and conformational change. As a reconfigurer of centromeric and flanking nucleosomes, RSC complex is required both for proper kinetochore function in chromosome segregation and, via a PKC1-dependent signaling pathway, for organization of the cellular cytoskeleton. Together with HTL1, NPL6, RSC3, RSC30 components, defines a fungal-specific module within the RSC complex that plays a role in many cellular functions including the maintenance of cell wall integrity. May be involved in the transfer of mannosylphosphate (MP) groups into N-linked oligosaccharides. The polypeptide is Chromatin structure-remodeling complex protein RSC14 (LDB7) (Saccharomyces cerevisiae (strain ATCC 204508 / S288c) (Baker's yeast)).